Here is a 304-residue protein sequence, read N- to C-terminus: Dermonecrotic toxin LiSicTox-betaIA1ii (304 aa).

Residues 1 to 21 (MLLCAVISFIVYAVFLQEANG) form the signal peptide. Residues 22–26 (HAAER) constitute a propeptide that is removed on maturation. Residue His38 is part of the active site. Residues Glu58 and Asp60 each coordinate Mg(2+). Catalysis depends on His74, which acts as the Nucleophile. 2 cysteine pairs are disulfide-bonded: Cys78–Cys84 and Cys80–Cys223. Asp118 contacts Mg(2+).

Belongs to the arthropod phospholipase D family. Class II subfamily. Mg(2+) serves as cofactor. In terms of tissue distribution, expressed by the venom gland.

The protein localises to the secreted. It catalyses the reaction an N-(acyl)-sphingosylphosphocholine = an N-(acyl)-sphingosyl-1,3-cyclic phosphate + choline. It carries out the reaction an N-(acyl)-sphingosylphosphoethanolamine = an N-(acyl)-sphingosyl-1,3-cyclic phosphate + ethanolamine. The enzyme catalyses a 1-acyl-sn-glycero-3-phosphocholine = a 1-acyl-sn-glycero-2,3-cyclic phosphate + choline. The catalysed reaction is a 1-acyl-sn-glycero-3-phosphoethanolamine = a 1-acyl-sn-glycero-2,3-cyclic phosphate + ethanolamine. In terms of biological role, dermonecrotic toxins cleave the phosphodiester linkage between the phosphate and headgroup of certain phospholipids (sphingolipid and lysolipid substrates), forming an alcohol (often choline) and a cyclic phosphate. This toxin acts on sphingomyelin (SM) with low activity. It may also act on ceramide phosphoethanolamine (CPE), lysophosphatidylcholine (LPC) and lysophosphatidylethanolamine (LPE), but not on lysophosphatidylserine (LPS), and lysophosphatidylglycerol (LPG). It acts by transphosphatidylation, releasing exclusively cyclic phosphate products as second products. Induces dermonecrosis, hemolysis, increased vascular permeability, edema, inflammatory response, and platelet aggregation. The protein is Dermonecrotic toxin LiSicTox-betaIA1ii of Loxosceles intermedia (Brown spider).